The chain runs to 630 residues: Ankyrin repeat protein OPG025 (630 aa).

6 ANK repeats span residues 36–69 (DGET…YKNI), 70–100 (NDFD…EINS), 103–134 (NGIN…PTCS), 174–210 (MGKT…EMCH), 338–367 (KHIN…VVVN), and 408–437 (HGRS…DINI).

This sequence belongs to the orthopoxvirus OPG025 family. In terms of assembly, interacts with components of host SCF complex CUL1 and SKP1 and components of the cullin deneddylation/COP9 signalosome complex subunits COPS7A and COPS7B.

Plays a role in the inhibition of host immune repsonse by counteracting the action of interferons on early events in the viral replication cycle. The sequence is that of Ankyrin repeat protein OPG025 (OPG025) from Monkeypox virus.